The chain runs to 44 residues: Phycoerythrin alpha-1 chain (44 aa).

The segment at 1-44 (AMDKSAKAPQITIFDHRGCSRAPKSETGGTATKDDQMMVKVSQV) is disordered. At Lys4 the chain carries 5-hydroxylysine. 15,16-dihydrobiliverdin contacts are provided by Cys19 and Arg21. Residues 24–26 (KSE) form a 15,16-dihydrobiliverdin chromophore region. Lys40 is a 15,16-dihydrobiliverdin binding site.

The protein belongs to the phycoerythrin family. Heterotetramer of 2 different alpha chains and 2 identical beta chains. The subunit composition could comprise of any combination of 2 out of 4 different alpha units with an invariant beta unit. Contains one covalently linked 15,16-dihydrobiliverdin chromophore.

The protein resides in the plastid. It is found in the chloroplast thylakoid membrane. Its function is as follows. Light-harvesting photosynthetic tetrapyrrole chromophore-protein from the phycobiliprotein complex. The polypeptide is Phycoerythrin alpha-1 chain (cpeA1) (Rhodomonas sp. (strain CS 24) (Chroomonas sp. (strain CS24))).